A 436-amino-acid chain; its full sequence is Ribulose bisphosphate carboxylase large chain (436 aa).

Substrate-binding residues include asparagine 104 and threonine 154. Catalysis depends on lysine 156, which acts as the Proton acceptor. Residue lysine 158 coordinates substrate. Residues lysine 182, aspartate 184, and glutamate 185 each coordinate Mg(2+). Lysine 182 carries the post-translational modification N6-carboxylysine. Histidine 275 (proton acceptor) is an active-site residue. The substrate site is built by arginine 276, histidine 308, and serine 360.

Belongs to the RuBisCO large chain family. Type I subfamily. Heterohexadecamer of 8 large chains and 8 small chains. Mg(2+) serves as cofactor.

Its subcellular location is the plastid. It is found in the chloroplast. The enzyme catalyses 2 (2R)-3-phosphoglycerate + 2 H(+) = D-ribulose 1,5-bisphosphate + CO2 + H2O. It catalyses the reaction D-ribulose 1,5-bisphosphate + O2 = 2-phosphoglycolate + (2R)-3-phosphoglycerate + 2 H(+). Functionally, ruBisCO catalyzes two reactions: the carboxylation of D-ribulose 1,5-bisphosphate, the primary event in carbon dioxide fixation, as well as the oxidative fragmentation of the pentose substrate in the photorespiration process. Both reactions occur simultaneously and in competition at the same active site. The sequence is that of Ribulose bisphosphate carboxylase large chain from Euglena viridis (Cercaria viridis).